A 220-amino-acid polypeptide reads, in one-letter code: Deoxyribose-phosphate aldolase 2 (220 aa).

The active-site Proton donor/acceptor is the aspartate 89. Catalysis depends on lysine 151, which acts as the Schiff-base intermediate with acetaldehyde. Residue lysine 180 is the Proton donor/acceptor of the active site.

It belongs to the DeoC/FbaB aldolase family. DeoC type 1 subfamily.

The protein resides in the cytoplasm. It catalyses the reaction 2-deoxy-D-ribose 5-phosphate = D-glyceraldehyde 3-phosphate + acetaldehyde. The protein operates within carbohydrate degradation; 2-deoxy-D-ribose 1-phosphate degradation; D-glyceraldehyde 3-phosphate and acetaldehyde from 2-deoxy-alpha-D-ribose 1-phosphate: step 2/2. Catalyzes a reversible aldol reaction between acetaldehyde and D-glyceraldehyde 3-phosphate to generate 2-deoxy-D-ribose 5-phosphate. This Staphylococcus aureus (strain N315) protein is Deoxyribose-phosphate aldolase 2.